The sequence spans 318 residues: Replication factor C small subunit (318 aa).

43–50 (GSVGTGKT) serves as a coordination point for ATP.

Belongs to the activator 1 small subunits family. RfcS subfamily. In terms of assembly, heteromultimer composed of small subunits (RfcS) and large subunits (RfcL).

Part of the RFC clamp loader complex which loads the PCNA sliding clamp onto DNA. The protein is Replication factor C small subunit of Thermoplasma acidophilum (strain ATCC 25905 / DSM 1728 / JCM 9062 / NBRC 15155 / AMRC-C165).